Consider the following 417-residue polypeptide: GTP-binding protein YPT11 (417 aa).

The interval 1–34 is disordered; the sequence is MSQRKRYSLNVVTSPSIPSPTPSAPIRTNESNWE. GTP-binding positions include 97–104, 228–232, and 292–295; these read GDANVGKT, DTAGQ, and NKID. 2 S-geranylgeranyl cysteine lipidation sites follow: cysteine 415 and cysteine 416.

The protein belongs to the small GTPase superfamily. Rab family. In terms of assembly, interacts with MYO2 (via C-terminal tail domain). Interacts with YIF1, YIP3, YIP4 and YIP5.

It localises to the endoplasmic reticulum membrane. The protein resides in the bud tip. It is found in the bud neck. Involved in the positive control of both endoplasmic reticulum (ER) and mitochondrion inheritance during cell divison. Required for the MYO2-dependent retention of newly inherited mitochondria at the bud tip in developing daughter cells. This Saccharomyces cerevisiae (strain RM11-1a) (Baker's yeast) protein is GTP-binding protein YPT11 (YPT11).